The primary structure comprises 114 residues: UPF0145 protein TTHA1944 (114 aa).

It belongs to the UPF0145 family.

In Thermus thermophilus (strain ATCC 27634 / DSM 579 / HB8), this protein is UPF0145 protein TTHA1944.